The following is a 267-amino-acid chain: Tryptophan synthase alpha chain (267 aa).

Residues Glu49 and Asp60 each act as proton acceptor in the active site.

The protein belongs to the TrpA family. As to quaternary structure, tetramer of two alpha and two beta chains.

The enzyme catalyses (1S,2R)-1-C-(indol-3-yl)glycerol 3-phosphate + L-serine = D-glyceraldehyde 3-phosphate + L-tryptophan + H2O. Its pathway is amino-acid biosynthesis; L-tryptophan biosynthesis; L-tryptophan from chorismate: step 5/5. In terms of biological role, the alpha subunit is responsible for the aldol cleavage of indoleglycerol phosphate to indole and glyceraldehyde 3-phosphate. The protein is Tryptophan synthase alpha chain of Geotalea uraniireducens (strain Rf4) (Geobacter uraniireducens).